The primary structure comprises 404 residues: Cytoplasmic tRNA 2-thiolation protein 2 (404 aa).

The protein belongs to the CTU2/NCS2 family.

Its subcellular location is the cytoplasm. The protein operates within tRNA modification; 5-methoxycarbonylmethyl-2-thiouridine-tRNA biosynthesis. Functionally, plays a central role in 2-thiolation of mcm(5)S(2)U at tRNA wobble positions of tRNA(Lys), tRNA(Glu) and tRNA(Gln). May act by forming a heterodimer with NCS6/CTU1 that ligates sulfur from thiocarboxylated URM1 onto the uridine of tRNAs at wobble position. The sequence is that of Cytoplasmic tRNA 2-thiolation protein 2 from Drosophila yakuba (Fruit fly).